The chain runs to 457 residues: Bifunctional protein GlmU (457 aa).

Residues 1 to 229 are pyrophosphorylase; sequence MYNCAIILAA…YEEIMGVNSR (229 aa). UDP-N-acetyl-alpha-D-glucosamine contacts are provided by residues 8–11, Lys-22, Gln-73, and 78–79; these read LAAG and GT. A Mg(2+)-binding site is contributed by Asp-103. Positions 140, 155, 170, and 227 each coordinate UDP-N-acetyl-alpha-D-glucosamine. Residue Asn-227 coordinates Mg(2+). Positions 230 to 250 are linker; that stretch reads VQLSEAEIVMRKRINHKHMVN. The N-acetyltransferase stretch occupies residues 251-457; sequence GVTFIDCEST…WLDKKGLLKK (207 aa). 2 residues coordinate UDP-N-acetyl-alpha-D-glucosamine: Arg-332 and Lys-350. The Proton acceptor role is filled by His-362. Residues Tyr-365 and Asn-376 each coordinate UDP-N-acetyl-alpha-D-glucosamine. Acetyl-CoA contacts are provided by residues 385 to 386, Ala-422, and Arg-439; that span reads NY.

The protein in the N-terminal section; belongs to the N-acetylglucosamine-1-phosphate uridyltransferase family. This sequence in the C-terminal section; belongs to the transferase hexapeptide repeat family. Homotrimer. The cofactor is Mg(2+).

It is found in the cytoplasm. It catalyses the reaction alpha-D-glucosamine 1-phosphate + acetyl-CoA = N-acetyl-alpha-D-glucosamine 1-phosphate + CoA + H(+). It carries out the reaction N-acetyl-alpha-D-glucosamine 1-phosphate + UTP + H(+) = UDP-N-acetyl-alpha-D-glucosamine + diphosphate. It participates in nucleotide-sugar biosynthesis; UDP-N-acetyl-alpha-D-glucosamine biosynthesis; N-acetyl-alpha-D-glucosamine 1-phosphate from alpha-D-glucosamine 6-phosphate (route II): step 2/2. The protein operates within nucleotide-sugar biosynthesis; UDP-N-acetyl-alpha-D-glucosamine biosynthesis; UDP-N-acetyl-alpha-D-glucosamine from N-acetyl-alpha-D-glucosamine 1-phosphate: step 1/1. It functions in the pathway bacterial outer membrane biogenesis; LPS lipid A biosynthesis. Catalyzes the last two sequential reactions in the de novo biosynthetic pathway for UDP-N-acetylglucosamine (UDP-GlcNAc). The C-terminal domain catalyzes the transfer of acetyl group from acetyl coenzyme A to glucosamine-1-phosphate (GlcN-1-P) to produce N-acetylglucosamine-1-phosphate (GlcNAc-1-P), which is converted into UDP-GlcNAc by the transfer of uridine 5-monophosphate (from uridine 5-triphosphate), a reaction catalyzed by the N-terminal domain. The chain is Bifunctional protein GlmU from Clostridium botulinum (strain 657 / Type Ba4).